A 290-amino-acid chain; its full sequence is Thymidylate synthase (290 aa).

Position 31 (Arg-31) interacts with dUMP. Residue His-61 coordinates (6R)-5,10-methylene-5,6,7,8-tetrahydrofolate. 152–153 (RR) is a binding site for dUMP. Cys-172 acts as the Nucleophile in catalysis. Residues 192–195 (RSAD), Asn-203, and 233–235 (HIY) contribute to the dUMP site. Asp-195 is a binding site for (6R)-5,10-methylene-5,6,7,8-tetrahydrofolate. Ala-289 provides a ligand contact to (6R)-5,10-methylene-5,6,7,8-tetrahydrofolate.

This sequence belongs to the thymidylate synthase family. Bacterial-type ThyA subfamily. Homodimer.

The protein resides in the cytoplasm. The enzyme catalyses dUMP + (6R)-5,10-methylene-5,6,7,8-tetrahydrofolate = 7,8-dihydrofolate + dTMP. Its pathway is pyrimidine metabolism; dTTP biosynthesis. Functionally, catalyzes the reductive methylation of 2'-deoxyuridine-5'-monophosphate (dUMP) to 2'-deoxythymidine-5'-monophosphate (dTMP) while utilizing 5,10-methylenetetrahydrofolate (mTHF) as the methyl donor and reductant in the reaction, yielding dihydrofolate (DHF) as a by-product. This enzymatic reaction provides an intracellular de novo source of dTMP, an essential precursor for DNA biosynthesis. This chain is Thymidylate synthase, found in Psychrobacter cryohalolentis (strain ATCC BAA-1226 / DSM 17306 / VKM B-2378 / K5).